We begin with the raw amino-acid sequence, 253 residues long: MKTLQMTLSNKKNNFIPYIMAGDHEKGLEGLKETIQLLEQAGSSAIEIGVPFSDPVADGPVIEQAGLRALARNVSLSSILETLKTIDTKVPLVIMTYFNPVYQFGIEKFVAALEKTPVKGLIIPDLPKEHEDYIKPFINDKDICLVPLVSLTTPLSRQKELVADAEGFIYAVAINGVTGKENAYSNQLDQHLKALSSLTDVPVLTGFGISTLSDVDRFNKVSSGVIVGSKIVRDLHEGKENEVIKFIENAINF.

Active-site proton acceptor residues include glutamate 47 and aspartate 58.

Belongs to the TrpA family. In terms of assembly, tetramer of two alpha and two beta chains.

It catalyses the reaction (1S,2R)-1-C-(indol-3-yl)glycerol 3-phosphate + L-serine = D-glyceraldehyde 3-phosphate + L-tryptophan + H2O. The protein operates within amino-acid biosynthesis; L-tryptophan biosynthesis; L-tryptophan from chorismate: step 5/5. The alpha subunit is responsible for the aldol cleavage of indoleglycerol phosphate to indole and glyceraldehyde 3-phosphate. In Lactococcus lactis subsp. lactis (strain IL1403) (Streptococcus lactis), this protein is Tryptophan synthase alpha chain.